The primary structure comprises 149 residues: D-aminoacyl-tRNA deacylase (149 aa).

Positions 137–138 match the Gly-cisPro motif, important for rejection of L-amino acids motif; the sequence is GP.

Belongs to the DTD family. Homodimer.

The protein localises to the cytoplasm. It catalyses the reaction glycyl-tRNA(Ala) + H2O = tRNA(Ala) + glycine + H(+). The enzyme catalyses a D-aminoacyl-tRNA + H2O = a tRNA + a D-alpha-amino acid + H(+). In terms of biological role, an aminoacyl-tRNA editing enzyme that deacylates mischarged D-aminoacyl-tRNAs. Also deacylates mischarged glycyl-tRNA(Ala), protecting cells against glycine mischarging by AlaRS. Acts via tRNA-based rather than protein-based catalysis; rejects L-amino acids rather than detecting D-amino acids in the active site. By recycling D-aminoacyl-tRNA to D-amino acids and free tRNA molecules, this enzyme counteracts the toxicity associated with the formation of D-aminoacyl-tRNA entities in vivo and helps enforce protein L-homochirality. The protein is D-aminoacyl-tRNA deacylase of Thermoanaerobacter sp. (strain X514).